A 296-amino-acid chain; its full sequence is L-ornithine N(alpha)-acyltransferase (296 aa).

The protein belongs to the acetyltransferase family. OlsB subfamily.

It carries out the reaction a (3R)-hydroxyacyl-[ACP] + L-ornithine = a lyso-ornithine lipid + holo-[ACP] + H(+). Its pathway is lipid metabolism. Its function is as follows. Catalyzes the first step in the biosynthesis of ornithine lipids, which are phosphorus-free membrane lipids. Catalyzes the 3-hydroxyacyl-acyl carrier protein-dependent acylation of ornithine to form lyso-ornithine lipid (LOL). The protein is L-ornithine N(alpha)-acyltransferase of Rhizobium meliloti (strain 1021) (Ensifer meliloti).